A 384-amino-acid chain; its full sequence is MHVTAITMEDANFPYRLGTDCAEELVARLGVRAASRYLVVCDTTVAALYGHDLVARLEKDAGPAVLLTHQVGEVHKDVTTVGALAEQALGAGADRRSVVVALGGGITGNIAGLLAALLFRGITLVHVPTTVVAMLDSVLSLKQAVNASFGKNLVGTFYQPAEVLADTAMLRTLPEREVRSGMGEVVKNALAVRPAMADRLAGLLRPDARYDDDALRWIIAESVAAKADVTGADKHERGDGLVLEYGHTAGHAIEHAARGAVAHGAGVAVGMVIAAEVSHRLGHASASFVARHRELISKAGLEDTVPACVRTDDVKNWLTYDNKRGYLDCAADTTPMVLLAGPGRPLRTGGMPLVPVPLAVLNETVDALAAPGRAGTDHRTAVPV.

NAD(+)-binding positions include D42, 73-76 (EVHK), 105-109 (GITGN), 129-130 (TT), 140-142 (SLK), and 151-152 (KN). Residue K142 is part of the active site. E184 is a binding site for Co(2+). E244 is a catalytic residue. Co(2+) contacts are provided by H247 and H263.

The protein belongs to the sugar phosphate cyclases superfamily. DOI synthase family. Requires NAD(+) as cofactor. Co(2+) is required as a cofactor.

The enzyme catalyses D-glucose 6-phosphate = 2-deoxy-L-scyllo-inosose + phosphate. Its pathway is metabolic intermediate biosynthesis; 2-deoxystreptamine biosynthesis; 2-deoxystreptamine from D-glucose 6-phosphate: step 1/4. It participates in antibiotic biosynthesis; lividomycin biosynthesis. Catalyzes the intramolecular carbocycle formation from D-glucose-6-phosphate to 2-deoxy-scyllo-inosose (DOI). The chain is 2-deoxy-scyllo-inosose synthase (livC) from Streptomyces lividus.